Consider the following 216-residue polypeptide: MAGRGGAARPNGPAAGNKICQFKLVLLGESAVGKSSLVLRFVKGQFHEYQESTIGAAFLTQTVCLDDTTVKFEIWDTAGQERYHSLAPMYYRGAQAAIVVYDITNTDTFVRAKNWVKELQRQASPNIVIALAGNKADLATKRAVDFQDAQTYADDNSLLFMETSAKTAMNVNEIFMAIAKKLPKNEPQNAPGGPGRNRVVDLQESSQPSRSQCCSN.

GTP-binding residues include Ser-30, Ala-31, Gly-33, Lys-34, Ser-35, Ser-36, His-47, Glu-48, Thr-53, Gly-79, Asn-134, Lys-135, Asp-137, Ala-165, and Lys-166. Ser-35 is a Mg(2+) binding site. Short sequence motifs (switch) lie at residues 45 to 57 (QFHE…IGAA) and 78 to 94 (AGQE…YRGA). Residue Thr-53 participates in Mg(2+) binding. Residues 184–216 (KNEPQNAPGGPGRNRVVDLQESSQPSRSQCCSN) form a disordered region. Over residues 203–216 (QESSQPSRSQCCSN) the composition is skewed to polar residues. S-geranylgeranyl cysteine attachment occurs at residues Cys-213 and Cys-214.

Belongs to the small GTPase superfamily. Rab family. The cofactor is Mg(2+). Detected in brain, ovary, rectum, small intestine, large intestine, liver, spleen, follicle and kidney (at protein level).

Its subcellular location is the cell membrane. The protein resides in the early endosome membrane. The enzyme catalyses GTP + H2O = GDP + phosphate + H(+). With respect to regulation, regulated by guanine nucleotide exchange factors (GEFs) which promote the exchange of bound GDP for free GTP. Regulated by GTPase activating proteins (GAPs) which increase the GTP hydrolysis activity. Inhibited by GDP dissociation inhibitors (GDIs). Its function is as follows. The small GTPases Rab are key regulators of intracellular membrane trafficking, from the formation of transport vesicles to their fusion with membranes. Rabs cycle between an inactive GDP-bound form and an active GTP-bound form that is able to recruit to membranes different sets of downstream effectors directly responsible for vesicle formation, movement, tethering and fusion. The chain is Ras-related protein Rab-5C (RAB5C) from Gallus gallus (Chicken).